The sequence spans 295 residues: Pyridoxal 5'-phosphate synthase subunit PdxS (295 aa).

Residue Asp25 coordinates D-ribose 5-phosphate. Catalysis depends on Lys82, which acts as the Schiff-base intermediate with D-ribose 5-phosphate. Residue Gly154 participates in D-ribose 5-phosphate binding. Position 166 (Arg166) interacts with D-glyceraldehyde 3-phosphate. D-ribose 5-phosphate is bound by residues Gly215 and 236–237 (GS).

It belongs to the PdxS/SNZ family. In the presence of PdxT, forms a dodecamer of heterodimers.

The enzyme catalyses aldehydo-D-ribose 5-phosphate + D-glyceraldehyde 3-phosphate + L-glutamine = pyridoxal 5'-phosphate + L-glutamate + phosphate + 3 H2O + H(+). It participates in cofactor biosynthesis; pyridoxal 5'-phosphate biosynthesis. Catalyzes the formation of pyridoxal 5'-phosphate from ribose 5-phosphate (RBP), glyceraldehyde 3-phosphate (G3P) and ammonia. The ammonia is provided by the PdxT subunit. Can also use ribulose 5-phosphate and dihydroxyacetone phosphate as substrates, resulting from enzyme-catalyzed isomerization of RBP and G3P, respectively. The chain is Pyridoxal 5'-phosphate synthase subunit PdxS from Staphylococcus saprophyticus subsp. saprophyticus (strain ATCC 15305 / DSM 20229 / NCIMB 8711 / NCTC 7292 / S-41).